A 211-amino-acid polypeptide reads, in one-letter code: Redox-sensing transcriptional repressor Rex (211 aa).

Positions 17–56 (LYYRFIQNFAQEGMERISSKELSEAMKIDSATIRRDFSYF) form a DNA-binding region, H-T-H motif. NAD(+) is bound at residue 91-96 (GVGNLG).

It belongs to the transcriptional regulatory Rex family. Homodimer.

It is found in the cytoplasm. Functionally, modulates transcription in response to changes in cellular NADH/NAD(+) redox state. The polypeptide is Redox-sensing transcriptional repressor Rex (Lysinibacillus sphaericus (strain C3-41)).